Here is a 172-residue protein sequence, read N- to C-terminus: MASIPCTFQLSARASSASAAAAARRSPRAAARLGWLRPSRLSAVVPASESGRVGPTCFFKFGNKDAEGAGIYGSQGRDDFDRDDVEQYFNYMGMLAVEGTYDKMEALLNQDIHPVDILLMLAASEGDKPKLEELLRAGAKYDVKDVDGRTALDRAADDTREFILGFAATLAA.

The transit peptide at 1 to 28 directs the protein to the chloroplast; that stretch reads MASIPCTFQLSARASSASAAAAARRSPR. Residues 114–146 form an ANK repeat; it reads PVDILLMLAASEGDKPKLEELLRAGAKYDVKDV.

It localises to the plastid. It is found in the chloroplast. In terms of biological role, involved in the import of light-harvesting complex proteins (LHCP) and subsequent routing of these proteins to the chloroplast signal recognition particle (SRP) pathway. The polypeptide is Protein LHCP TRANSLOCATION DEFECT (LTD) (Oryza sativa subsp. indica (Rice)).